The sequence spans 458 residues: Phosphoglucosamine mutase (458 aa).

The Phosphoserine intermediate role is filled by serine 106. Mg(2+)-binding residues include serine 106, aspartate 247, aspartate 249, and aspartate 251. At serine 106 the chain carries Phosphoserine.

Belongs to the phosphohexose mutase family. Mg(2+) serves as cofactor. Post-translationally, activated by phosphorylation.

The enzyme catalyses alpha-D-glucosamine 1-phosphate = D-glucosamine 6-phosphate. Functionally, catalyzes the conversion of glucosamine-6-phosphate to glucosamine-1-phosphate. This is Phosphoglucosamine mutase from Chlamydia trachomatis serovar L2 (strain ATCC VR-902B / DSM 19102 / 434/Bu).